A 424-amino-acid polypeptide reads, in one-letter code: Zinc finger and BTB domain-containing protein 6 (424 aa).

One can recognise a BTB domain in the interval 33–97; that stretch reads CDVSIYINDT…CYTGALEVKR (65 aa). Ser-202 bears the Phosphoserine mark. C2H2-type zinc fingers lie at residues 301-323, 326-348, 354-376, and 382-405; these read HQCPRCPRGFLHVENYLRHLKMH, FLCLQCGKTFTQKKNLNRHIRGH, FQCTVCLKTFTAKSTLQDHLNIH, and YKCHCCDMDFKHKSALKKHLTSLH. The segment at 403 to 424 is disordered; it reads SLHGRSSGEKLPRHDLERQNLL. Over residues 408 to 424 the composition is skewed to basic and acidic residues; the sequence is SSGEKLPRHDLERQNLL.

Its subcellular location is the nucleus. Functionally, may be involved in transcriptional regulation. This Bos taurus (Bovine) protein is Zinc finger and BTB domain-containing protein 6 (ZBTB6).